The chain runs to 286 residues: Fructose-bisphosphate aldolase (286 aa).

Serine 50 is a D-glyceraldehyde 3-phosphate binding site. The active-site Proton donor is the aspartate 85. Residues histidine 86, aspartate 107, glutamate 137, and histidine 181 each coordinate Zn(2+). Glycine 182 serves as a coordination point for dihydroxyacetone phosphate. Histidine 209 serves as a coordination point for Zn(2+). Residues 210-212 (GGT) and 231-234 (NVNT) each bind dihydroxyacetone phosphate.

Belongs to the class II fructose-bisphosphate aldolase family. Zn(2+) serves as cofactor.

It carries out the reaction beta-D-fructose 1,6-bisphosphate = D-glyceraldehyde 3-phosphate + dihydroxyacetone phosphate. Its pathway is carbohydrate degradation; glycolysis; D-glyceraldehyde 3-phosphate and glycerone phosphate from D-glucose: step 4/4. Functionally, catalyzes the aldol condensation of dihydroxyacetone phosphate (DHAP or glycerone-phosphate) with glyceraldehyde 3-phosphate (G3P) to form fructose 1,6-bisphosphate (FBP) in gluconeogenesis and the reverse reaction in glycolysis. The protein is Fructose-bisphosphate aldolase (fba) of Staphylococcus epidermidis (strain ATCC 35984 / DSM 28319 / BCRC 17069 / CCUG 31568 / BM 3577 / RP62A).